Here is a 345-residue protein sequence, read N- to C-terminus: Skn-1 dependent zygotic transcript 15 protein (345 aa).

Residues 11–55 (AFGLHKLPHLVSDKVVKSMVPMELFTYSMVAEETKALVKRLFKKV) form the F-box domain.

Its function is as follows. May have a role in embryogenesis. The polypeptide is Skn-1 dependent zygotic transcript 15 protein (sdz-15) (Caenorhabditis elegans).